We begin with the raw amino-acid sequence, 98 residues long: NADH-ubiquinone oxidoreductase chain 4L (98 aa).

The next 3 helical transmembrane spans lie at 2-22, 29-49, and 61-81; these read PSIS…MLVF, SLLC…LTIM, and ILLL…LVMM.

The protein belongs to the complex I subunit 4L family. As to quaternary structure, core subunit of respiratory chain NADH dehydrogenase (Complex I) which is composed of 45 different subunits.

It is found in the mitochondrion inner membrane. It carries out the reaction a ubiquinone + NADH + 5 H(+)(in) = a ubiquinol + NAD(+) + 4 H(+)(out). Functionally, core subunit of the mitochondrial membrane respiratory chain NADH dehydrogenase (Complex I) which catalyzes electron transfer from NADH through the respiratory chain, using ubiquinone as an electron acceptor. Part of the enzyme membrane arm which is embedded in the lipid bilayer and involved in proton translocation. The polypeptide is NADH-ubiquinone oxidoreductase chain 4L (MT-ND4L) (Lepilemur seali (Seal's sportive lemur)).